The chain runs to 159 residues: Mediator of RNA polymerase II transcription subunit 10 (159 aa).

Positions 54-77 are disordered; that stretch reads STHTKPQPPSQDDEQKGSANDPLL.

The protein belongs to the Mediator complex subunit 10 family. Component of the Mediator complex.

The protein localises to the nucleus. In terms of biological role, component of the Mediator complex, a coactivator involved in the regulated transcription of nearly all RNA polymerase II-dependent genes. Mediator functions as a bridge to convey information from gene-specific regulatory proteins to the basal RNA polymerase II transcription machinery. Mediator is recruited to promoters by direct interactions with regulatory proteins and serves as a scaffold for the assembly of a functional preinitiation complex with RNA polymerase II and the general transcription factors. In Aspergillus fumigatus (strain ATCC MYA-4609 / CBS 101355 / FGSC A1100 / Af293) (Neosartorya fumigata), this protein is Mediator of RNA polymerase II transcription subunit 10 (nut2).